We begin with the raw amino-acid sequence, 475 residues long: Ribulose bisphosphate carboxylase large chain (475 aa).

The propeptide occupies 1-2 (MS). Proline 3 carries the N-acetylproline modification. Lysine 14 bears the N6,N6,N6-trimethyllysine mark. Substrate is bound by residues asparagine 123 and threonine 173. Lysine 175 (proton acceptor) is an active-site residue. Residue lysine 177 coordinates substrate. Mg(2+) is bound by residues lysine 201, aspartate 203, and glutamate 204. Lysine 201 bears the N6-carboxylysine mark. The active-site Proton acceptor is histidine 294. The substrate site is built by arginine 295, histidine 327, and serine 379.

This sequence belongs to the RuBisCO large chain family. Type I subfamily. Heterohexadecamer of 8 large chains and 8 small chains; disulfide-linked. The disulfide link is formed within the large subunit homodimers. Mg(2+) serves as cofactor. Post-translationally, the disulfide bond which can form in the large chain dimeric partners within the hexadecamer appears to be associated with oxidative stress and protein turnover.

It is found in the plastid. It localises to the chloroplast. The catalysed reaction is 2 (2R)-3-phosphoglycerate + 2 H(+) = D-ribulose 1,5-bisphosphate + CO2 + H2O. It carries out the reaction D-ribulose 1,5-bisphosphate + O2 = 2-phosphoglycolate + (2R)-3-phosphoglycerate + 2 H(+). RuBisCO catalyzes two reactions: the carboxylation of D-ribulose 1,5-bisphosphate, the primary event in carbon dioxide fixation, as well as the oxidative fragmentation of the pentose substrate in the photorespiration process. Both reactions occur simultaneously and in competition at the same active site. The protein is Ribulose bisphosphate carboxylase large chain of Afrocarpus gracilior (African fern pine).